The following is a 656-amino-acid chain: Spermatogenesis-associated protein 13 (656 aa).

Over residues 1 to 12 the composition is skewed to polar residues; that stretch reads MHPASVTTTSQD. The disordered stretch occupies residues 1-26; it reads MHPASVTTTSQDPCAPSGSCRGGRRR. A Phosphoserine modification is found at Ser-82. The interval 85–115 is disordered; the sequence is IGLDRVGRRRQMKTSNVSSDGGAESSALVDD. The ABR (APC-binding region) domain stretch occupies residues 102–154; sequence SSDGGAESSALVDDNGSEEDFSYEELCQANPRYLQPGGEQLAINELISDGSVV. Residue Ser-118 is modified to Phosphoserine. In terms of domain architecture, SH3 spans 151–210; sequence GSVVCAEALWDHVTMDDQELGFKAGDVIQVLEASNKDWWWGRNEDKEAWFPASFVRLRVN. Residues 215-242 form a disordered region; it reads PENCSSSHGEEQDEDTSKARHKHPESQQ. In terms of domain architecture, DH spans 244 to 428; the sequence is MRTNVIQEIM…KNVACLINER (185 aa). Residues 459-565 form the PH domain; that stretch reads ELIHSGELTK…WLQAYADERR (107 aa). The interval 565 to 656 is C-terminal tail; the sequence is RRVQEDQQMG…TFHKLTPFRK (92 aa).

In terms of assembly, interacts (via ABR and SH3 domain) with APC. The binding of APC enhances its GEF activity by relieving it from an autoinhibitory conformation, in which the ABR and SH3 domains are associated with the C-terminal tail. Interacts (via C-terminal tail) with PPP1R9B (via C-terminus). Interacts with RAC1. Expression is aberrantly enhanced in most colorectal tumors.

It is found in the cytoplasm. The protein localises to the cell projection. The protein resides in the filopodium. It localises to the lamellipodium. Its subcellular location is the ruffle membrane. It is found in the podosome. With respect to regulation, both the ABR and the SH3 domains contribute to maintaining the protein in an inhibited conformation by associating with the C-terminal tail. Binding of these domains to the C-terminal tail inhibits the activity of the protein by blocking a region that is required for its GEF activity. Functionally, acts as a guanine nucleotide exchange factor (GEF) for RHOA, RAC1 and CDC42 GTPases. Regulates cell migration and adhesion assembly and disassembly through a RAC1, PI3K, RHOA and AKT1-dependent mechanism. Increases both RAC1 and CDC42 activity, but decreases the amount of active RHOA. Required for MMP9 up-regulation via the JNK signaling pathway in colorectal tumor cells. Involved in tumor angiogenesis and may play a role in intestinal adenoma formation and tumor progression. This chain is Spermatogenesis-associated protein 13 (Spata13), found in Mus musculus (Mouse).